The sequence spans 131 residues: Squamosa promoter-binding-like protein 3 (131 aa).

Basic and acidic residues predominate over residues 1 to 17 (MSMRRSKAEGKRSLREL). Residues 1–54 (MSMRRSKAEGKRSLRELSEEEEEEEETEDEDTFEEEEALEKKQKGKATSSSGVC) form a disordered region. Acidic residues predominate over residues 18–38 (SEEEEEEEETEDEDTFEEEEA). A sufficient and necessary for DNA binding region spans residues 45-129 (GKATSSSGVC…GHNERRRKST (85 aa)). The SBP-type zinc-finger motif lies at 51 to 128 (SGVCQVESCT…AGHNERRRKS (78 aa)). The Zn(2+) site is built by C54, C59, C76, H79, C95, C98, H102, and C114. A Bipartite nuclear localization signal motif is present at residues 111-127 (KRSCRRRLAGHNERRRK).

Zn(2+) serves as cofactor. Expressed in vegetative and inflorescence apical meristems, floral meristems, leaf and flower organ primordia, inflorescence stem tissue and to lower extent in roots.

It is found in the nucleus. The protein resides in the cytoplasm. Trans-acting factor that binds specifically to the consensus nucleotide sequence 5'-TNCGTACAA-3' of AP1 promoter. Binds specifically to the 5'-GTAC-3' core sequence. Promotes both vegetative phase change and flowering. Regulates phase-specific patterns of leaf epidermal differentiation and flowering time, but does not seem to affect leaf shape. The protein is Squamosa promoter-binding-like protein 3 (SPL3) of Arabidopsis thaliana (Mouse-ear cress).